The following is a 412-amino-acid chain: Phosphoglycerate kinase (412 aa).

Residues 26 to 28 (DFN), R42, 65 to 68 (HLGR), R133, and R166 each bind substrate. ATP contacts are provided by residues K217, G308, E339, and 368 to 371 (GGDS).

Belongs to the phosphoglycerate kinase family. Monomer.

The protein localises to the cytoplasm. It catalyses the reaction (2R)-3-phosphoglycerate + ATP = (2R)-3-phospho-glyceroyl phosphate + ADP. The protein operates within carbohydrate degradation; glycolysis; pyruvate from D-glyceraldehyde 3-phosphate: step 2/5. The sequence is that of Phosphoglycerate kinase from Synechococcus sp. (strain JA-2-3B'a(2-13)) (Cyanobacteria bacterium Yellowstone B-Prime).